The primary structure comprises 376 residues: Zinc transporter 7 (376 aa).

The Cytoplasmic portion of the chain corresponds to 1–37; it reads MLPLSIKDDEYKPPKFNLFGKISGWFRSILSDKTSRN. The chain crosses the membrane as a helical span at residues 38-58; that stretch reads LFFFLCLNLSFAFVELLYGIW. At 59–67 the chain is on the lumenal side; sequence SNCLGLISD. A helical membrane pass occupies residues 68–88; it reads SFHMFFDSTAILAGLAASVIS. The Cytoplasmic segment spans residues 89–102; it reads KWRDNDAFSYGYVR. A helical transmembrane segment spans residues 103-123; it reads AEVLAGFVNGLFLIFTAFFIF. The Lumenal segment spans residues 124-140; that stretch reads SEGVERALAPPDVHHER. Residues 141–161 traverse the membrane as a helical segment; sequence LLLVSILGFVVNLIGIFVFKH. A his-rich loop region spans residues 161–218; it reads HGGHGHSHGSGHGHSHSLFNGALDQAHGHVDHCHSHEVKHGAAHSHDHAHGHGHFHSH. Over 162–236 the chain is Cytoplasmic; sequence GGHGHSHGSG…TGPSRQILQG (75 aa). A compositionally biased stretch (basic and acidic residues) spans 194-222; sequence HSHEVKHGAAHSHDHAHGHGHFHSHDGPS. Positions 194–226 are disordered; sequence HSHEVKHGAAHSHDHAHGHGHFHSHDGPSLKET. A helical transmembrane segment spans residues 237 to 257; the sequence is VFLHILADTLGSIGVIASAIM. Residues 258 to 262 lie on the Lumenal side of the membrane; sequence MQNFG. The chain crosses the membrane as a helical span at residues 263–283; it reads LMIADPICSILIAILIVVSVI. At 284 to 376 the chain is on the cytoplasmic side; that stretch reads PLLRESVGIL…LYVQIDFAAM (93 aa).

The protein belongs to the cation diffusion facilitator (CDF) transporter (TC 2.A.4) family. SLC30A subfamily. In terms of assembly, homooligomer. In terms of tissue distribution, highly expressed in megakaryocytes and other bone marrow cells and in the epithelium of the small intestine. Expressed in testis (in Leydig cells), adrenal gland (in adrenal medula, zona fasciculata and zona of reticularis), and pituitary gland (in somatotropic cells).

The protein localises to the golgi apparatus membrane. It localises to the cytoplasmic vesicle. The protein resides in the golgi apparatus. It is found in the trans-Golgi network. Its subcellular location is the sarcoplasmic reticulum. The protein localises to the mitochondrion. It carries out the reaction Zn(2+)(in) = Zn(2+)(out). Zinc ion transporter mediating zinc entry from the cytosol into the lumen of organelles along the secretory pathway. By contributing to zinc ion homeostasis within the early secretory pathway, regulates the activation and folding of enzymes like alkaline phosphatases. This Homo sapiens (Human) protein is Zinc transporter 7.